The sequence spans 42 residues: Potassium channel toxin gamma-KTx 1.3 (42 aa).

4 cysteine pairs are disulfide-bonded: Cys5/Cys23, Cys11/Cys34, Cys20/Cys39, and Cys24/Cys41.

Belongs to the ergtoxin family. Gamma-KTx 1 subfamily. Expressed by the venom gland.

Its subcellular location is the secreted. Functionally, blocks Kv11/ERG potassium channels. The polypeptide is Potassium channel toxin gamma-KTx 1.3 (Centruroides gracilis (Slenderbrown scorpion)).